Here is a 396-residue protein sequence, read N- to C-terminus: Tryptophan synthase beta chain (396 aa).

K88 is modified (N6-(pyridoxal phosphate)lysine).

This sequence belongs to the TrpB family. As to quaternary structure, tetramer of two alpha and two beta chains. Pyridoxal 5'-phosphate is required as a cofactor.

It catalyses the reaction (1S,2R)-1-C-(indol-3-yl)glycerol 3-phosphate + L-serine = D-glyceraldehyde 3-phosphate + L-tryptophan + H2O. It participates in amino-acid biosynthesis; L-tryptophan biosynthesis; L-tryptophan from chorismate: step 5/5. The beta subunit is responsible for the synthesis of L-tryptophan from indole and L-serine. The polypeptide is Tryptophan synthase beta chain (Shewanella oneidensis (strain ATCC 700550 / JCM 31522 / CIP 106686 / LMG 19005 / NCIMB 14063 / MR-1)).